The chain runs to 397 residues: Purine ribonucleoside efflux pump NepI (397 aa).

Residues 1–21 (MNENIAEKFRADGVARPNWSA) are Cytoplasmic-facing. The helical transmembrane segment at 22-42 (VFAVAFCVACLITVEFLPVSL) threads the bilayer. At 43–54 (LTPMAQDLGISE) the chain is on the periplasmic side. The chain crosses the membrane as a helical span at residues 55-75 (GVAGQSVTVTAFVAMFSSLFI). Topologically, residues 76-85 (TQIIQATDRR) are cytoplasmic. Residues 86–106 (YIVILFAVLLTASCLMVSFAN) traverse the membrane as a helical segment. Ser107 is a topological domain (periplasmic). A helical transmembrane segment spans residues 108 to 128 (FTLLLLGRACLGLALGGFWAM). The Cytoplasmic segment spans residues 129 to 147 (SASLTMRLVPARTVPKALS). A helical transmembrane segment spans residues 148-168 (VIFGAVSIALVIAAPLGSFLG). The Periplasmic portion of the chain corresponds to 169 to 175 (GIIGWRN). Residues 176–196 (VFNAAAVMGVLCVIWVVKSLP) form a helical membrane-spanning segment. The Cytoplasmic portion of the chain corresponds to 197–215 (SLPGEPSHQKQNMFSLLQR). The helical transmembrane segment at 216-236 (PGVMAGMIAIFMSFAGQFAFF) threads the bilayer. The Periplasmic portion of the chain corresponds to 237–255 (TYIRPVYMNLAGFDVDGLT). The chain crosses the membrane as a helical span at residues 256–276 (LVLLSFGIASFVGTSFSSYVL). Topologically, residues 277–281 (KRSVK) are cytoplasmic. A helical membrane pass occupies residues 282 to 302 (LALAGAPLLLALSALTLIVWG). Topologically, residues 303–305 (SDK) are periplasmic. A helical membrane pass occupies residues 306-326 (TVAAVIAIIWGLAFALVPVGW). Residues 327 to 343 (STWITRSLADQAEKAGS) lie on the Cytoplasmic side of the membrane. A helical membrane pass occupies residues 344 to 364 (IQVAVIQLANTCGAAVGGYAL). At 365–366 (DN) the chain is on the periplasmic side. The chain crosses the membrane as a helical span at residues 367–387 (FGLLSPLALSGGLMLLTALVV). Residues 388-397 (AAKVRITPMS) are Cytoplasmic-facing.

The protein belongs to the major facilitator superfamily. DHA1 family. NepI (TC 2.A.1.2.26) subfamily.

It is found in the cell inner membrane. It carries out the reaction inosine(in) + H(+)(out) = inosine(out) + H(+)(in). The enzyme catalyses guanosine(in) + H(+)(out) = guanosine(out) + H(+)(in). In terms of biological role, involved in the efflux of purine ribonucleosides, such as inosine and guanosine. The chain is Purine ribonucleoside efflux pump NepI from Salmonella paratyphi B (strain ATCC BAA-1250 / SPB7).